A 543-amino-acid polypeptide reads, in one-letter code: MFSLQELCRKNIYILPYPLGKHVLQQLGLYWKGHGSLQRIGDDHVLLQQDLIFSINEALRMAGEEGNNEVVKLLLLWEGNLHYAIIGALEGDRYDLIHKYYDQIGDCHKILPLIQDPQIFEKCHELSNSCNIRCLLEHAVKHDMLSILQKHREQIRLHLALTQILFELACHERKNDIIRWIGYSLHIHHLETIFDVAFAHKNLSLYVLGYELLMHKVNTEAAYIELPNLLSYHLRTAAAGGLLNFMLETIKHGGYVDKTVLSAAIRYKHRKIVAHFIHQVPRKTVKKLLLYAVQARAPKKTLNLLLSSLNYSVHTITKQLVHNVVIYSSTLVVKLLLMRRKNKLNLVDAVLARLVKYSTYTDIVQFMSEFSVSPERVIKMAARESRTFLIEMISKAAWGNHPQTLIHHLKQLAHTMKSQSGKDLIIYTIHYIYLNSNMLVAEEEKNIFKLAKFYANHNAVNRFKQVCEDYYALDVDARFKTLILECFEIAVQKNYPRIANIVDDYVRFLFYRGDITEEEIHEAYSLKDAEFYVDLKWLQHDLF.

It belongs to the asfivirus MGF 505 family.

Its function is as follows. Plays a role in virus cell tropism, and may be required for efficient virus replication in macrophages. This African swine fever virus (isolate Warthog/Namibia/Wart80/1980) (ASFV) protein is Protein MGF 505-10R.